A 512-amino-acid chain; its full sequence is Maturase K (512 aa).

It belongs to the intron maturase 2 family. MatK subfamily.

The protein resides in the plastid. It localises to the chloroplast. Functionally, usually encoded in the trnK tRNA gene intron. Probably assists in splicing its own and other chloroplast group II introns. The chain is Maturase K from Oenothera parviflora (Small-flowered evening primrose).